The primary structure comprises 329 residues: Peroxidase 50 (329 aa).

The signal sequence occupies residues 1-25 (MVVVNKTNLLLLLLSLCLTLDLSSA). 4 disulfides stabilise this stretch: cysteine 36/cysteine 119, cysteine 69/cysteine 74, cysteine 125/cysteine 325, and cysteine 204/cysteine 236. Residue histidine 67 is the Proton acceptor of the active site. Residues aspartate 68, valine 71, glycine 73, aspartate 75, and serine 77 each contribute to the Ca(2+) site. Proline 167 is a substrate binding site. Histidine 197 contacts heme b. Threonine 198 lines the Ca(2+) pocket. Asparagine 215 is a glycosylation site (N-linked (GlcNAc...) asparagine). Ca(2+) is bound by residues aspartate 249, threonine 252, and aspartate 257.

This sequence belongs to the peroxidase family. Classical plant (class III) peroxidase subfamily. Requires heme b as cofactor. It depends on Ca(2+) as a cofactor. As to expression, expressed in roots and leaves.

The protein resides in the secreted. The enzyme catalyses 2 a phenolic donor + H2O2 = 2 a phenolic radical donor + 2 H2O. Functionally, removal of H(2)O(2), oxidation of toxic reductants, biosynthesis and degradation of lignin, suberization, auxin catabolism, response to environmental stresses such as wounding, pathogen attack and oxidative stress. These functions might be dependent on each isozyme/isoform in each plant tissue. Exhibits a Ca(2+)-pectate binding affinity which could be interpreted in vivo as a specificity to interact with the pectic structure of the cell wall. The polypeptide is Peroxidase 50 (PER50) (Arabidopsis thaliana (Mouse-ear cress)).